The sequence spans 396 residues: Ornithine aminotransferase 2 (396 aa).

N6-(pyridoxal phosphate)lysine is present on Lys-255.

Belongs to the class-III pyridoxal-phosphate-dependent aminotransferase family. OAT subfamily. Pyridoxal 5'-phosphate is required as a cofactor.

It is found in the cytoplasm. The catalysed reaction is a 2-oxocarboxylate + L-ornithine = L-glutamate 5-semialdehyde + an L-alpha-amino acid. The protein operates within amino-acid biosynthesis; L-proline biosynthesis; L-glutamate 5-semialdehyde from L-ornithine: step 1/1. Catalyzes the interconversion of ornithine to glutamate semialdehyde. In Staphylococcus aureus (strain COL), this protein is Ornithine aminotransferase 2.